A 690-amino-acid chain; its full sequence is MRTGKYITKYDYIGYYTKQKAMWFFTNAEIKAKIDLLLKNVSSYDFEDLDDEEEHDYEIDAYEIYKEQTDFLSQLEINKNIDVDNPKIAEGILLDKASQEDIKKTYHYIKKIINFETDPLFKNKSLEELANLTLELIDKNDKIIFFQPVFINDKLITKPDCFIKKNDEFIVIETKGTSSIKKHHILDVFYQAQVISKHPYFINKCISYQMCIVDYVKLKKNQVNFTISPYYNYQKSVVLSLPPSAANQFNKFEINELKRKRKRGEAIYLKKDENKKYYEDIDAYDHCKGILIDDLIDGTYSSINDYKEAKKIYDYKTEDLKDDVRFNKTMDELIKGIEKLHNDFDEVISELLVHKQNLLALPIEQRIPNYFIPSYNDKGDYKDNDFWLELRNLYAYSGYDVIKYSGKILTIKKFGLDNVTKDILGIDILKTYANQTFFNLYKNNQIKIYQAAVDLFAKLKSKKVYFDFESINSAIRAVDNSFPFTQTVTQNSIIIDDGSCDIKNLKCTNMIIDPREINNEWFKAIIDKIHQGLEYSYIVYNKSFEASRLKEMAEFINEEIYELKVSEIIKNMYDLADFFIVSMGKQLIVIPELKGFYSIKKVLPIIEKEFPQIYHDVNCLNYKELSVGNGLVCQTKTTKRFFNTITDLEWEQFVHDARIYCENDVRAMIAVEYFIKKLIDEAKMKNLILS.

To M.genitalium MG366 and M.pneumoniae MPN544.

This is an uncharacterized protein from Ureaplasma parvum serovar 3 (strain ATCC 700970).